Reading from the N-terminus, the 417-residue chain is Envelope glycoprotein D (417 aa).

The signal sequence occupies residues 1–18 (MQGPTLAVLGALLAVAVS). Topologically, residues 19-360 (LPTPAPRVTV…APATPAAPDA (342 aa)) are virion surface. 2 N-linked (GlcNAc...) asparagine; by host glycosylation sites follow: asparagine 41 and asparagine 102. Disulfide bonds link cysteine 75/cysteine 197, cysteine 114/cysteine 213, and cysteine 126/cysteine 135. The tract at residues 259–355 (EESKGYEPPP…THPPPAPATP (97 aa)) is disordered. Residues 279–292 (GDDEAREDEGETED) show a composition bias toward acidic residues. A helical membrane pass occupies residues 361 to 389 (VPVGVGIGIAAAAIACVAAAAAGAYFVYT). Over 390–417 (RRRGAGPLPRKPKKLPAFGNVNYSALPG) the chain is Intravirion.

This sequence belongs to the herpesviridae glycoprotein D family.

The protein resides in the virion membrane. Envelope glycoprotein that binds to host cell entry receptors, promoting the virus entry into host cells. May trigger fusion with host membrane, by recruiting the fusion machinery composed of gB and gH/gL. This chain is Envelope glycoprotein D (gD), found in Bovine herpesvirus 1.2 (strain ST) (BoHV-1).